A 209-amino-acid polypeptide reads, in one-letter code: 8-oxoguanine DNA glycosylase/AP lyase (209 aa).

Residues K131 and D149 contribute to the active site.

This sequence belongs to the type-2 OGG1 family.

It catalyses the reaction 2'-deoxyribonucleotide-(2'-deoxyribose 5'-phosphate)-2'-deoxyribonucleotide-DNA = a 3'-end 2'-deoxyribonucleotide-(2,3-dehydro-2,3-deoxyribose 5'-phosphate)-DNA + a 5'-end 5'-phospho-2'-deoxyribonucleoside-DNA + H(+). In terms of biological role, catalyzes the excision of an oxidatively damaged form of guanine (7,8-dihydro-8-oxoguanine = 8-oxoG) from DNA. Also cleaves the DNA backbone at apurinic/apyrimidinic sites (AP sites). The chain is 8-oxoguanine DNA glycosylase/AP lyase from Korarchaeum cryptofilum (strain OPF8).